Here is a 1588-residue protein sequence, read N- to C-terminus: Ubiquitin carboxyl-terminal hydrolase 54 (1588 aa).

Residue arginine 12 is modified to Omega-N-methylarginine. Residues 31 to 352 (KGLSNEPGQN…QPLLLLYADP (322 aa)) enclose the USP domain. Cysteine 42 functions as the Nucleophile in the catalytic mechanism. Histidine 67, cysteine 69, cysteine 74, cysteine 77, histidine 133, cysteine 145, cysteine 150, histidine 153, cysteine 166, cysteine 169, cysteine 225, and cysteine 229 together coordinate Zn(2+). The Proton acceptor role is filled by histidine 302. Composition is skewed to basic and acidic residues over residues 382–391 (GHLTDSECNQ) and 424–434 (SEGETLKEKQA). Disordered regions lie at residues 382-519 (GHLT…PTWR), 555-577 (FTPD…RSQH), and 601-624 (ESGY…PPDS). Serine 424 is modified (phosphoserine). Positions 453–471 (TVSNMIHSRPSLASQTSAG) are enriched in polar residues. Positions 499–513 (TESTSSEAKSSSSSK) are enriched in low complexity. The span at 555-572 (FTPDEVSKPTANDIKDGG) shows a compositional bias: basic and acidic residues. Over residues 601-616 (ESGYESSERNSSSPVS) the composition is skewed to low complexity. Residues serine 613 and serine 616 each carry the phosphoserine modification. A coiled-coil region spans residues 682-712 (ELDELQEEVVRRAQEQELRKKREKELEAAKG). 4 disordered regions span residues 801-834 (RSLQ…PQPT), 1089-1182 (QNTS…PDMY), 1221-1242 (SQVK…SHPR), and 1491-1561 (WGNL…RSPG). Positions 808–826 (QQQASSQQPVQPSASLPSQ) are enriched in low complexity. Residues 1126–1147 (GREHCRWVKQPRSPDGRERPPC) show a composition bias toward basic and acidic residues. At serine 1138 the chain carries Phosphoserine. Positions 1510 to 1524 (PSSNLHVPLRSTWNS) are enriched in polar residues. Over residues 1536–1547 (RRIDMPPDDDWR) the composition is skewed to basic and acidic residues.

Belongs to the peptidase C19 family.

It carries out the reaction Thiol-dependent hydrolysis of ester, thioester, amide, peptide and isopeptide bonds formed by the C-terminal Gly of ubiquitin (a 76-residue protein attached to proteins as an intracellular targeting signal).. In terms of biological role, deubiquitinase that specifically mediates 'Lys-63'-linked deubiquitination of substrates with a polyubiquitin chain composed of at least 3 ubiquitins. Specifically recognizes ubiquitin chain in position S2 and catalyzes cleavage of polyubiquitin within 'Lys-63'-linked chains. Not able to deubiquitinate substrates with shorter ubiquitin chains. Mediates deubiquitination of PLK4, maintaining PLK4 stability by reducing its ubiquitination-mediated degradation. The sequence is that of Ubiquitin carboxyl-terminal hydrolase 54 (Usp54) from Mus musculus (Mouse).